The chain runs to 281 residues: 18S rRNA (guanine-N(7))-methyltransferase (281 aa).

The span at 212-231 (LPKGLTESQDADQASESMFT) shows a compositional bias: polar residues. The tract at residues 212–281 (LPKGLTESQD…YTGRKRKPRF (70 aa)) is disordered. The span at 242–256 (RDLVKKSREWVLEKK) shows a compositional bias: basic and acidic residues.

Belongs to the class I-like SAM-binding methyltransferase superfamily. BUD23/WBSCR22 family. In terms of assembly, heterodimer with TRMT112; this heterodimerization is necessary for the metabolic stability and activity of the catalytic subunit BUD23. Interacts with GRIP1. In terms of processing, may be ubiquitinated and targeted to degradation in response to pro-inflammatory cytokine signaling.

The protein localises to the nucleus. It is found in the nucleoplasm. It localises to the cytoplasm. Its subcellular location is the perinuclear region. It catalyses the reaction a guanosine in 18S rRNA + S-adenosyl-L-methionine = an N(7)-methylguanosine in 18S rRNA + S-adenosyl-L-homocysteine. In terms of biological role, S-adenosyl-L-methionine-dependent methyltransferase that specifically methylates the N(7) position of a guanine in 18S rRNA. Requires the methyltransferase adapter protein TRM112 for full rRNA methyltransferase activity. Involved in the pre-rRNA processing steps leading to small-subunit rRNA production independently of its RNA-modifying catalytic activity. Important for biogenesis end export of the 40S ribosomal subunit independent on its methyltransferase activity. Locus-specific steroid receptor coactivator. Potentiates transactivation by glucocorticoid (NR3C1), mineralocorticoid (NR3C2), androgen (AR) and progesterone (PGR) receptors. Required for the maintenance of open chromatin at the TSC22D3/GILZ locus to facilitate NR3C1 loading on the response elements. Required for maintenance of dimethylation on histone H3 'Lys-79' (H3K79me2), although direct histone methyltransferase activity is not observed in vitro. The sequence is that of 18S rRNA (guanine-N(7))-methyltransferase from Mus musculus (Mouse).